The following is a 355-amino-acid chain: UPF0324 membrane protein PA5383 (355 aa).

A run of 10 helical transmembrane segments spans residues 20-37 (IPGL…ILLG), 44-66 (HNGI…TLYP), 71-93 (GSAA…LYGL), 100-122 (IAGV…FGLA), 137-159 (TLLI…EPVV), 166-188 (VAVA…PALF), 233-255 (AVIA…SAWL), 275-297 (WFAV…PALV), 307-324 (LLAM…LSAI), and 331-353 (PLLL…TRLA).

The protein belongs to the UPF0324 family.

The protein resides in the cell membrane. This is UPF0324 membrane protein PA5383 from Pseudomonas aeruginosa (strain ATCC 15692 / DSM 22644 / CIP 104116 / JCM 14847 / LMG 12228 / 1C / PRS 101 / PAO1).